We begin with the raw amino-acid sequence, 236 residues long: Putative lipoprotein MlpA (236 aa).

Residues 1–21 form the signal peptide; the sequence is MTKNIVNTALVLVGAGSLLTG. Cysteine 22 carries the N-palmitoyl cysteine lipid modification. Cysteine 22 carries the S-diacylglycerol cysteine lipid modification.

The protein resides in the cell membrane. The protein is Putative lipoprotein MlpA (mlpA) of Myxococcus xanthus.